The sequence spans 183 residues: Photosystem I assembly protein Ycf4 (183 aa).

The next 2 helical transmembrane spans lie at 21–43 and 58–80; these read YWWASVLLLGGSSFLVVGLSSRL and FIPQGLVMCFYGLVGLVVSTYLW.

This sequence belongs to the Ycf4 family.

It is found in the plastid. The protein resides in the chloroplast thylakoid membrane. Seems to be required for the assembly of the photosystem I complex. This Nephroselmis olivacea (Green alga) protein is Photosystem I assembly protein Ycf4.